We begin with the raw amino-acid sequence, 1043 residues long: Beta-klotho (1043 aa).

Residues 1-994 lie on the Extracellular side of the membrane; that stretch reads MKTGCAAGSP…ICSFLVEKKP (994 aa). Glycosyl hydrolase-1 regions lie at residues 77–506 and 515–965; these read LYDT…DNGF and MKGR…SSGL. N-linked (GlcNAc...) asparagine glycans are attached at residues asparagine 84, asparagine 122, asparagine 161, asparagine 211, asparagine 262, asparagine 308, asparagine 389, asparagine 552, asparagine 609, asparagine 700, asparagine 704, and asparagine 837. The helical transmembrane segment at 995-1015 threads the bilayer; it reads LIFFGCCFISTLAVLLSITVF. At 1016-1043 the chain is on the cytoplasmic side; it reads HHQKRRKFQKARNLQNIPLKKGHSRVFS.

The protein belongs to the glycosyl hydrolase 1 family. Klotho subfamily. In terms of assembly, interacts with FGF19; this interaction is direct. Interacts (via C-terminus) with FGF21; this interaction is direct. Interacts with FGFR1 and FGFR4. In terms of tissue distribution, present in liver, muscle and white adipose tissue, but not in kidney (at protein level). Expressed in liver and pancreas, and at lower levels in skin, stomach, skeletal muscle, small intestine and lung.

It localises to the cell membrane. In terms of biological role, contributes to the transcriptional repression of cholesterol 7-alpha-hydroxylase (CYP7A1), the rate-limiting enzyme in bile acid synthesis. Probably inactive as a glycosidase. Increases the ability of FGFR1 and FGFR4 to bind FGF21. The protein is Beta-klotho (Klb) of Mus musculus (Mouse).